A 228-amino-acid polypeptide reads, in one-letter code: Biopolymer transport protein exbB1 (228 aa).

The next 3 helical transmembrane spans lie at 11-31, 116-136, and 158-178; these read LGLM…LLAE, LTLI…LGLI, and LGVA…AVAG.

Belongs to the ExbB/TolQ family. The accessory proteins ExbB and ExbD seem to form a complex with TonB.

It localises to the cell inner membrane. Its function is as follows. Involved in the TonB-dependent energy-dependent transport of various receptor-bound substrates. Protects ExbD from proteolytic degradation and functionally stabilizes TonB. This Vibrio cholerae serotype O1 (strain ATCC 39315 / El Tor Inaba N16961) protein is Biopolymer transport protein exbB1 (exbB1).